The following is a 290-amino-acid chain: 4-hydroxybenzoate octaprenyltransferase (290 aa).

7 consecutive transmembrane segments (helical) span residues 33-53 (LWAL…AVFV), 99-119 (LFVV…TMTI), 141-161 (LPQV…FAAV), 163-183 (ESVP…AVAY), 213-233 (FIIG…GWLN), 237-257 (WGYY…QKLI), and 268-288 (AFMN…MSYW).

Belongs to the UbiA prenyltransferase family. Requires Mg(2+) as cofactor.

It localises to the cell inner membrane. The enzyme catalyses all-trans-octaprenyl diphosphate + 4-hydroxybenzoate = 4-hydroxy-3-(all-trans-octaprenyl)benzoate + diphosphate. The protein operates within cofactor biosynthesis; ubiquinone biosynthesis. In terms of biological role, catalyzes the prenylation of para-hydroxybenzoate (PHB) with an all-trans polyprenyl group. Mediates the second step in the final reaction sequence of ubiquinone-8 (UQ-8) biosynthesis, which is the condensation of the polyisoprenoid side chain with PHB, generating the first membrane-bound Q intermediate 3-octaprenyl-4-hydroxybenzoate. The polypeptide is 4-hydroxybenzoate octaprenyltransferase (Escherichia fergusonii (strain ATCC 35469 / DSM 13698 / CCUG 18766 / IAM 14443 / JCM 21226 / LMG 7866 / NBRC 102419 / NCTC 12128 / CDC 0568-73)).